We begin with the raw amino-acid sequence, 306 residues long: MSAEKIKCSCCGKEQNANQYYISESPFNSATGKLSVCKSCLQNEFQKDKDNLKNVQNILRMIDRPFVYDLWVSAVNESESKKKSAGNVLGTYMKNIGMKDYKSKTWADSEFDFEEEQEYTTQLLLAKSTEDISKEDIDELMQFWGRGLDVEDYIWLQNEYIDFTNRYECDSKGMELLINEICLTRLDIRKRRENGEKVDQQQKTLQDLLGSSNLKPVQETGASGVEQESFGTLIKKYENERPIPEPEPRWKDPDKIGKYIKVFFLGHLSRMLGLKNQYSEEYWEEMNKHTVEEPVAEEEDRENDLT.

The sequence is that of SPbeta prophage-derived uncharacterized protein YonG (yonG) from Bacillus subtilis (strain 168).